We begin with the raw amino-acid sequence, 139 residues long: NAD(P) transhydrogenase subunit alpha part 2 (139 aa).

3 helical membrane passes run 49-69 (FWWLMTVFVLACFIGFYVVWS), 78-98 (LMGVTNAISSVIVVGALIATG), and 107-127 (VLGFFAILLASVNIFGGFIVT).

Complex of an alpha and a beta chain; in Rhodospirillum, the alpha chain seems to be made of two subunits.

Its subcellular location is the cell inner membrane. It catalyses the reaction NAD(+) + NADPH + H(+)(in) = NADH + NADP(+) + H(+)(out). Functionally, the transhydrogenation between NADH and NADP is coupled to respiration and ATP hydrolysis and functions as a proton pump across the membrane. This is NAD(P) transhydrogenase subunit alpha part 2 (pntAB) from Rhodospirillum rubrum (strain ATCC 11170 / ATH 1.1.1 / DSM 467 / LMG 4362 / NCIMB 8255 / S1).